A 67-amino-acid chain; its full sequence is Protein AaeX (67 aa).

2 consecutive transmembrane segments (helical) span residues 3–23 (LFPV…ELIL) and 43–63 (FVWH…YLIS).

The protein belongs to the AaeX family.

Its subcellular location is the cell membrane. The chain is Protein AaeX from Enterobacter sp. (strain 638).